Reading from the N-terminus, the 252-residue chain is tRNA-cytidine(32) 2-sulfurtransferase (252 aa).

Positions 37–42 (SGGKDS) match the PP-loop motif motif. [4Fe-4S] cluster-binding residues include C112, C115, and C202.

The protein belongs to the TtcA family. Homodimer. It depends on Mg(2+) as a cofactor. [4Fe-4S] cluster serves as cofactor.

It localises to the cytoplasm. The enzyme catalyses cytidine(32) in tRNA + S-sulfanyl-L-cysteinyl-[cysteine desulfurase] + AH2 + ATP = 2-thiocytidine(32) in tRNA + L-cysteinyl-[cysteine desulfurase] + A + AMP + diphosphate + H(+). It participates in tRNA modification. Its function is as follows. Catalyzes the ATP-dependent 2-thiolation of cytidine in position 32 of tRNA, to form 2-thiocytidine (s(2)C32). The sulfur atoms are provided by the cysteine/cysteine desulfurase (IscS) system. The protein is tRNA-cytidine(32) 2-sulfurtransferase of Geotalea uraniireducens (strain Rf4) (Geobacter uraniireducens).